Reading from the N-terminus, the 56-residue chain is Large ribosomal subunit protein bL32 (56 aa).

Residues 1 to 20 (MAVPKRRTSRSNTRSRRSQW) show a composition bias toward basic residues. The disordered stretch occupies residues 1–24 (MAVPKRRTSRSNTRSRRSQWKAKV).

Belongs to the bacterial ribosomal protein bL32 family.

In Frankia casuarinae (strain DSM 45818 / CECT 9043 / HFP020203 / CcI3), this protein is Large ribosomal subunit protein bL32.